Here is a 127-residue protein sequence, read N- to C-terminus: Apolipoprotein C-IV (127 aa).

Residues 1-27 form the signal peptide; the sequence is MSLLRNRLQDLPALCLCVLVLACIGAC. Asn-63 is a glycosylation site (N-linked (GlcNAc...) asparagine).

It belongs to the apolipoprotein C4 family.

The protein resides in the secreted. May participate in lipoprotein metabolism. This chain is Apolipoprotein C-IV (APOC4), found in Colobus guereza (Mantled guereza).